A 254-amino-acid polypeptide reads, in one-letter code: Serotonin N-acetyltransferase 1, chloroplastic (254 aa).

A chloroplast-targeting transit peptide spans 1 to 74 (MAPAASASAS…LRSGFLKSNN (74 aa)). The 144-residue stretch at 111-254 (IIFSSAGDVN…IKGMFWYPRF (144 aa)) folds into the N-acetyltransferase domain.

The protein belongs to the acetyltransferase family. Expressed in roots and shoots.

Its subcellular location is the plastid. The protein resides in the chloroplast. The protein localises to the nucleus. It catalyses the reaction serotonin + acetyl-CoA = N-acetylserotonin + CoA + H(+). The catalysed reaction is tyramine + acetyl-CoA = N-acetyltyramine + CoA + H(+). It carries out the reaction tryptamine + acetyl-CoA = N-acetyltryptamine + CoA + H(+). The enzyme catalyses 5-methoxytryptamine + acetyl-CoA = melatonin + CoA + H(+). It participates in aromatic compound metabolism; melatonin biosynthesis; melatonin from serotonin: step 1/2. Its function is as follows. Catalyzes the N-acetylation of serotonin into N-acetylserotonin, the penultimate step in the synthesis of melatonin. Catalyzes in vitro the N-acetylation of tryptamine to produce N-acetyltryptamine, 5-methoxytryptamine to produce melatonin and tyramine to produce N-acetyltyramine. This chain is Serotonin N-acetyltransferase 1, chloroplastic, found in Oryza sativa subsp. japonica (Rice).